Reading from the N-terminus, the 739-residue chain is Sulfate transporter (739 aa).

2 stretches are compositionally biased toward basic and acidic residues: residues 1–17 (MSSE…RDLP) and 31–46 (TQRR…ETGH). The tract at residues 1-47 (MSSENKEQHDLSPRDLPEEAFGFPSELPLETQRRSGTDLRQSETGHG) is disordered. Phosphoserine is present on S12. 2 helical membrane-spanning segments follow: residues 112-132 (VMSG…YSLL) and 137-157 (PIYG…FGTS). An N-linked (GlcNAc...) asparagine glycan is attached at N205. 2 helical membrane passes run 227–247 (FMAG…VSVY) and 255–275 (GFVT…LLGL). N357 is a glycosylation site (N-linked (GlcNAc...) asparagine). Helical transmembrane passes span 378–398 (LIPN…AITV), 420–440 (AIGF…SAAL), 455–475 (LSAI…APLF), and 524–544 (LLST…CVIL). An STAS domain is found at 568–719 (TYKNLRSKSG…YSLSEAVAFA (152 aa)).

It belongs to the SLC26A/SulP transporter (TC 2.A.53) family. In terms of processing, N-glycosylated. In terms of tissue distribution, distributed mainly in the thymus, testis and osteoblastic cells. Highly expressed in the bone, cartilage, kidney and colon.

It is found in the cell membrane. The protein localises to the apical cell membrane. It carries out the reaction oxalate(in) + sulfate(out) = oxalate(out) + sulfate(in). It catalyses the reaction sulfate(out) + 2 chloride(in) = sulfate(in) + 2 chloride(out). The enzyme catalyses oxalate(out) + 2 chloride(in) = oxalate(in) + 2 chloride(out). The catalysed reaction is bromide(in) + chloride(out) = bromide(out) + chloride(in). It carries out the reaction nitrate(in) + chloride(out) = nitrate(out) + chloride(in). It catalyses the reaction iodide(in) + chloride(out) = iodide(out) + chloride(in). Functionally, sulfate transporter which mediates sulfate uptake into chondrocytes in order to maintain adequate sulfation of proteoglycans which is needed for cartilage development. Mediates electroneutral anion exchange of sulfate ions for oxalate ions, sulfate and oxalate ions for chloride and/or hydroxyl ions and chloride ions for bromide, iodide and nitrate ions. The coupling of sulfate transport to both hydroxyl and chloride ions likely serves to ensure transport at both acidic pH when most sulfate uptake is mediated by sulfate-hydroxide exchange and alkaline pH when most sulfate uptake is mediated by sulfate-chloride exchange. Essential for chondrocyte proliferation, differentiation and cell size expansion. The sequence is that of Sulfate transporter (Slc26a2) from Mus musculus (Mouse).